Reading from the N-terminus, the 1368-residue chain is DNA-directed RNA polymerase subunit beta (1368 aa).

Belongs to the RNA polymerase beta chain family. As to quaternary structure, the RNAP catalytic core consists of 2 alpha, 1 beta, 1 beta' and 1 omega subunit. When a sigma factor is associated with the core the holoenzyme is formed, which can initiate transcription.

The enzyme catalyses RNA(n) + a ribonucleoside 5'-triphosphate = RNA(n+1) + diphosphate. In terms of biological role, DNA-dependent RNA polymerase catalyzes the transcription of DNA into RNA using the four ribonucleoside triphosphates as substrates. The polypeptide is DNA-directed RNA polymerase subunit beta (Herminiimonas arsenicoxydans).